The following is a 473-amino-acid chain: Gamma-aminobutyric acid receptor subunit beta-3 (473 aa).

Residues 1–25 (MWGFAGGRLFGIFSAPVLVAVVCCA) form the signal peptide. Residues 26 to 246 (QSVNDPGNMS…FRLKRNIGYF (221 aa)) lie on the Extracellular side of the membrane. Asn33 and Asn105 each carry an N-linked (GlcNAc...) asparagine glycan. Tyr122 lines the histamine pocket. A disulfide bond links Cys161 and Cys175. N-linked (GlcNAc...) asparagine glycosylation occurs at Asn174. Residues Glu180, Tyr182, and Thr227 each contribute to the 4-aminobutanoate site. Residues 181-182 (SY) and Thr227 each bind histamine. The chain crosses the membrane as a helical span at residues 247-267 (ILQTYMPSILITILSWVSFWI). Topologically, residues 268–271 (NYDA) are cytoplasmic. A helical transmembrane segment spans residues 272 to 292 (SAARVALGITTVLTMTTINTH). Residues 293-304 (LRETLPKIPYVK) are Extracellular-facing. Residues 305–328 (AIDMYLMGCFVFVFLALLEYAFVN) form a helical membrane-spanning segment. Topologically, residues 329-447 (YIFFGRGPQR…KIPDLTDVNA (119 aa)) are cytoplasmic. The chain crosses the membrane as a helical span at residues 448 to 470 (IDRWSRIVFPFTFSLFNLVYWLY). Topologically, residues 471 to 473 (YVN) are extracellular.

It belongs to the ligand-gated ion channel (TC 1.A.9) family. Gamma-aminobutyric acid receptor (TC 1.A.9.5) subfamily. GABRB3 sub-subfamily. Heteropentamer, formed by a combination of alpha (GABRA1-6), beta (GABRB1-3), gamma (GABRG1-3), delta (GABRD), epsilon (GABRE), rho (GABRR1-3), pi (GABRP) and theta (GABRQ) chains, each subunit exhibiting distinct physiological and pharmacological properties. Can form functional homopentamers (in vitro). Interacts with UBQLN1. May interact with KIF21B. Identified in a complex of 720 kDa composed of LHFPL4, NLGN2, GABRA1, GABRB2, GABRG2 and GABRB3. Interacts with LHFPL4. Interacts with GIT1; this interaction is required for synaptic GABRB3 surface stability and inhibitory synapse strength.

Its subcellular location is the postsynaptic cell membrane. It is found in the cell membrane. The protein resides in the cytoplasmic vesicle membrane. It catalyses the reaction chloride(in) = chloride(out). Potentiated by histamine. Its function is as follows. Beta subunit of the heteropentameric ligand-gated chloride channel gated by gamma-aminobutyric acid (GABA), a major inhibitory neurotransmitter in the brain. GABA-gated chloride channels, also named GABA(A) receptors (GABAAR), consist of five subunits arranged around a central pore and contain GABA active binding site(s) located at the alpha and beta subunit interface(s). GABAARs containing beta-3/GABRB3 subunit are found at both synaptic and extrasynaptic sites. When activated by GABA, GABAARs selectively allow the flow of chloride anions across the cell membrane down their electrochemical gradient. Chloride influx into the postsynaptic neuron following GABAAR opening decreases the neuron ability to generate a new action potential, thereby reducing nerve transmission. GABAARs containing alpha-1 and beta-3 subunits exhibit synaptogenic activity; the gamma-2 subunit being necessary but not sufficient to induce rapid synaptic contacts formation. Extrasynaptic beta-3 receptors contribute to the tonic GABAergic inhibition. GABAARs containing alpha-1, beta-3 and epsilon subunits may permit spontaneous chloride channel activity while preserving the structural information required for GABA-gated openings. Beta-containing GABAARs can simultaneously bind GABA and histamine where histamine binds at the interface of two neighboring beta subunits, which may be involved in the regulation of sleep and wakefulness. Plays an important role in somatosensation and in the production of antinociception. This chain is Gamma-aminobutyric acid receptor subunit beta-3, found in Mus musculus (Mouse).